The following is a 182-amino-acid chain: Adenine phosphoribosyltransferase (182 aa).

This sequence belongs to the purine/pyrimidine phosphoribosyltransferase family. As to quaternary structure, homodimer.

It is found in the cytoplasm. It carries out the reaction AMP + diphosphate = 5-phospho-alpha-D-ribose 1-diphosphate + adenine. It participates in purine metabolism; AMP biosynthesis via salvage pathway; AMP from adenine: step 1/1. In terms of biological role, catalyzes a salvage reaction resulting in the formation of AMP, that is energically less costly than de novo synthesis. The protein is Adenine phosphoribosyltransferase of Sulfurimonas denitrificans (strain ATCC 33889 / DSM 1251) (Thiomicrospira denitrificans (strain ATCC 33889 / DSM 1251)).